Reading from the N-terminus, the 80-residue chain is NADH-ubiquinone oxidoreductase chain 5 (80 aa).

2 helical membrane passes run 4 to 24 (ISFL…LNFM) and 44 to 64 (IVMT…VLLI).

This sequence belongs to the complex I subunit 5 family.

The protein localises to the mitochondrion inner membrane. It catalyses the reaction a ubiquinone + NADH + 5 H(+)(in) = a ubiquinol + NAD(+) + 4 H(+)(out). Its function is as follows. Core subunit of the mitochondrial membrane respiratory chain NADH dehydrogenase (Complex I) that is believed to belong to the minimal assembly required for catalysis. Complex I functions in the transfer of electrons from NADH to the respiratory chain. The immediate electron acceptor for the enzyme is believed to be ubiquinone. The protein is NADH-ubiquinone oxidoreductase chain 5 (ND5) of Ceratitis capitata (Mediterranean fruit fly).